A 58-amino-acid chain; its full sequence is SPbeta prophage-derived uncharacterized protein YonT (58 aa).

A helical membrane pass occupies residues 6–26; it reads GIVVAFLISLTVLTINSLTIV. The tract at residues 35–58 is disordered; sequence GTSKKKKRIRKRLRPKRQRQRIRR. Basic residues predominate over residues 36 to 58; the sequence is TSKKKKRIRKRLRPKRQRQRIRR.

The protein resides in the cell membrane. The sequence is that of SPbeta prophage-derived uncharacterized protein YonT (yonT) from Bacillus subtilis (strain 168).